A 1164-amino-acid polypeptide reads, in one-letter code: Hamartin (1164 aa).

Lys30 participates in a covalent cross-link: Glycyl lysine isopeptide (Lys-Gly) (interchain with G-Cter in ubiquitin). The interval 403 to 787 (SDDYVHISLP…QIRQLQHDRE (385 aa)) is mediates interaction with WDR45B. The tract at residues 439–571 (LNDRGSEEPP…ADESPAGDRE (133 aa)) is disordered. A compositionally biased stretch (basic and acidic residues) spans 474–487 (EKDKEEAAISRELS). A phosphoserine mark is found at Ser487, Ser505, Ser511, Ser521, and Ser598. The span at 513–530 (PGSQRKTHSAASSSQGAS) shows a compositional bias: polar residues. The stretch at 721 to 997 (RKVIKAAALE…AAEERLDCCN (277 aa)) forms a coiled coil. Residues 1006-1085 (GHNEEASGHN…TTVGSLPSSK (80 aa)) are disordered. Positions 1007–1020 (HNEEASGHNGETKT) are enriched in basic and acidic residues. Positions 1073-1085 (SIPTTVGSLPSSK) are enriched in polar residues. The residue at position 1100 (Ser1100) is a Phosphoserine. The interval 1131 to 1164 (IPLNLDGPHPSPPTPDSVGQLHIMDYNETHHEHS) is disordered. Residues 1155–1164 (DYNETHHEHS) are compositionally biased toward basic and acidic residues.

Component of the TSC-TBC complex (also named Rhebulator complex), composed of 2 molecules of TSC1, 2 molecules of TSC2 and 1 molecule of TBC1D7. Probably forms a complex composed of chaperones HSP90 and HSP70, co-chaperones STIP1/HOP, CDC37, PPP5C, PTGES3/p23, TSC1 and client protein TSC2. Forms a complex composed of chaperones HSP90 and HSP70, co-chaperones CDC37, PPP5C, TSC1 and client protein TSC2, CDK4, AKT, RAF1 and NR3C1; this complex does not contain co-chaperones STIP1/HOP and PTGES3/p23. Forms a complex containing HSP90AA1, TSC1 and TSC2; TSC1 is required to recruit TCS2 to the complex. Interacts (via C-terminus) with the closed form of HSP90AA1 (via the middle domain and TPR repeat-binding motif). Interacts with DOCK7. Interacts with FBXW5. Interacts with WDR45B. Interacts with RPAP3 and URI1. Phosphorylation at Ser-505 does not affect interaction with TSC2. Post-translationally, 'Lys-63'-linked ubiquitinated at Lys-30 by PELI1; the ubiquitination promotes TSC1/TSC2 complex stability. Highly expressed in skeletal muscle, followed by heart, brain, placenta, pancreas, lung, liver and kidney. Also expressed in embryonic kidney cells.

The protein resides in the lysosome membrane. It is found in the cytoplasm. Its subcellular location is the cytosol. Its function is as follows. Non-catalytic component of the TSC-TBC complex, a multiprotein complex that acts as a negative regulator of the canonical mTORC1 complex, an evolutionarily conserved central nutrient sensor that stimulates anabolic reactions and macromolecule biosynthesis to promote cellular biomass generation and growth. The TSC-TBC complex acts as a GTPase-activating protein (GAP) for the small GTPase RHEB, a direct activator of the protein kinase activity of mTORC1. In absence of nutrients, the TSC-TBC complex inhibits mTORC1, thereby preventing phosphorylation of ribosomal protein S6 kinase (RPS6KB1 and RPS6KB2) and EIF4EBP1 (4E-BP1) by the mTORC1 signaling. The TSC-TBC complex is inactivated in response to nutrients, relieving inhibition of mTORC1. Within the TSC-TBC complex, TSC1 stabilizes TSC2 and prevents TSC2 self-aggregation. Acts as a tumor suppressor. Involved in microtubule-mediated protein transport via its ability to regulate mTORC1 signaling. Also acts as a co-chaperone for HSP90AA1 facilitating HSP90AA1 chaperoning of protein clients such as kinases, TSC2 and glucocorticoid receptor NR3C1. Increases ATP binding to HSP90AA1 and inhibits HSP90AA1 ATPase activity. Competes with the activating co-chaperone AHSA1 for binding to HSP90AA1, thereby providing a reciprocal regulatory mechanism for chaperoning of client proteins. Recruits TSC2 to HSP90AA1 and stabilizes TSC2 by preventing the interaction between TSC2 and ubiquitin ligase HERC1. The sequence is that of Hamartin from Homo sapiens (Human).